A 450-amino-acid polypeptide reads, in one-letter code: ATP-dependent protease ATPase subunit HslU (450 aa).

ATP-binding positions include valine 29, 71-76 (GVGKTE), aspartate 261, glutamate 328, and arginine 400.

Belongs to the ClpX chaperone family. HslU subfamily. A double ring-shaped homohexamer of HslV is capped on each side by a ring-shaped HslU homohexamer. The assembly of the HslU/HslV complex is dependent on binding of ATP.

The protein localises to the cytoplasm. Functionally, ATPase subunit of a proteasome-like degradation complex; this subunit has chaperone activity. The binding of ATP and its subsequent hydrolysis by HslU are essential for unfolding of protein substrates subsequently hydrolyzed by HslV. HslU recognizes the N-terminal part of its protein substrates and unfolds these before they are guided to HslV for hydrolysis. The chain is ATP-dependent protease ATPase subunit HslU from Rickettsia rickettsii (strain Iowa).